We begin with the raw amino-acid sequence, 186 residues long: Ribosome rescue factor SmrB (186 aa).

In terms of domain architecture, Smr spans I99–E174.

Belongs to the SmrB family. In terms of assembly, associates with collided ribosomes, but not with correctly translating polysomes.

Acts as a ribosome collision sensor. Detects stalled/collided disomes (pairs of ribosomes where the leading ribosome is stalled and a second ribosome has collided with it) and endonucleolytically cleaves mRNA at the 5' boundary of the stalled ribosome. Stalled/collided disomes form a new interface (primarily via the 30S subunits) that binds SmrB. Cleaved mRNA becomes available for tmRNA ligation, leading to ribosomal subunit dissociation and rescue of stalled ribosomes. The protein is Ribosome rescue factor SmrB of Buchnera aphidicola subsp. Acyrthosiphon pisum (strain 5A).